The following is a 411-amino-acid chain: MRSQPHVLSIVLAGGEGKRLFPFTADRAKPAVPFGGSYRLIDFVLSNLVNAGYMKVCVLTQYKSHSLDRHISQSWQLSGLAGEYITPVPAQQRLGKRWFTGSADAILQSLNLIYDEDPEYIIVFGADHVYRMDPEQMVKEHIESGAACSVAGIRVPRKEATAFGCIQADDDGTITEFLEKPADPPATPDDPDVTFASMGNYVFTTQALIDALKEDSEDENSAHDMGGNIIPYFVNRGEAHVHDFSRNVVPGETDRDHGYWRDVGTVDAFYEAHMDLISVYPVFNLYNRKWPIHTSDDSNLPPAKFVKGGIAQSSIVAAGCIISAGTVRNSVLGPGVVVEEGASVEGCVLMDGVRIGKGAVVRHAILDKNVRVGDNALIGVDRARDSERFTLSQGGVVCVPKNYELHGADED.

Alpha-D-glucose 1-phosphate-binding positions include Gly164, 179–180 (EK), and Ser197.

This sequence belongs to the bacterial/plant glucose-1-phosphate adenylyltransferase family. As to quaternary structure, homotetramer.

It catalyses the reaction alpha-D-glucose 1-phosphate + ATP + H(+) = ADP-alpha-D-glucose + diphosphate. It functions in the pathway glycan biosynthesis; glycogen biosynthesis. In terms of biological role, involved in the biosynthesis of ADP-glucose, a building block required for the elongation reactions to produce glycogen. Catalyzes the reaction between ATP and alpha-D-glucose 1-phosphate (G1P) to produce pyrophosphate and ADP-Glc. This Corynebacterium kroppenstedtii (strain DSM 44385 / JCM 11950 / CIP 105744 / CCUG 35717) protein is Glucose-1-phosphate adenylyltransferase.